The sequence spans 302 residues: uncharacterized protein (302 aa).

Residues 1–24 (MTEISELASSSQKPEKTKYNLPKP) are disordered.

This is an uncharacterized protein from Schizosaccharomyces pombe (strain 972 / ATCC 24843) (Fission yeast).